A 151-amino-acid chain; its full sequence is Metalloproteinase inhibitor 3 (151 aa).

The region spanning 1–108 is the NTR domain; the sequence is CNSDIVIRAK…GLNYRYHLGC (108 aa). 3 disulfide bridges follow: cysteine 1–cysteine 108, cysteine 115–cysteine 120, and cysteine 128–cysteine 149. The segment at 53-54 is involved in metalloproteinase-binding; sequence ES. The mediates interaction with EFEMP1 stretch occupies residues 71–151; that stretch reads GRVYDGKVYT…YQSKHYACIR (81 aa).

Belongs to the protease inhibitor I35 (TIMP) family. In terms of assembly, interacts with EFEMP1.

The protein resides in the secreted. It localises to the extracellular space. The protein localises to the extracellular matrix. Complexes with metalloproteinases (such as collagenases) and irreversibly inactivates them by binding to their catalytic zinc cofactor. May form part of a tissue-specific acute response to remodeling stimuli. The chain is Metalloproteinase inhibitor 3 (TIMP3) from Oryctolagus cuniculus (Rabbit).